We begin with the raw amino-acid sequence, 144 residues long: Small ribosomal subunit protein bS6 (144 aa).

Residues 99 to 144 (KASPLAPCEEKGEEGKAEDAADELTTFGMADDDDLGDDDDTVEAGI) form a disordered region. The span at 106–117 (CEEKGEEGKAED) shows a compositional bias: basic and acidic residues. Positions 128–144 (ADDDDLGDDDDTVEAGI) are enriched in acidic residues.

Belongs to the bacterial ribosomal protein bS6 family.

Functionally, binds together with bS18 to 16S ribosomal RNA. The protein is Small ribosomal subunit protein bS6 of Magnetococcus marinus (strain ATCC BAA-1437 / JCM 17883 / MC-1).